We begin with the raw amino-acid sequence, 239 residues long: MMDLFETNTYLFNDLRYLEEGDHGPLQHLDMPGVSPLYDGNHSPLSPGPDNVPSETGGESSGDEHVLAPPGLRAHCEGQCLMWACKVCKRKSAPTDRRKAATLRERRRLKKINEAFDALKRKSVANPNQRLPKVEILRSAISYIERLQELLQSLDEQERGQSGASDTRNDKEQNRPSGGDYCWKKASETWPTSADHSAIINQRDGACESSASSSLLCLSSIVSSISDDKTDLRQGVQED.

The tract at residues 27–64 (QHLDMPGVSPLYDGNHSPLSPGPDNVPSETGGESSGDE) is disordered. The region spanning 96–147 (DRRKAATLRERRRLKKINEAFDALKRKSVANPNQRLPKVEILRSAISYIERL) is the bHLH domain. The disordered stretch occupies residues 155 to 184 (DEQERGQSGASDTRNDKEQNRPSGGDYCWK).

In terms of assembly, efficient DNA binding requires dimerization with another bHLH protein.

The protein resides in the nucleus. Functionally, involved in muscle differentiation (myogenic factor). Induces fibroblasts to differentiate into myoblasts. Probable sequence specific DNA-binding protein. This is Myogenic factor 6 (myf6) from Tetraodon nigroviridis (Spotted green pufferfish).